A 98-amino-acid chain; its full sequence is NADH-ubiquinone oxidoreductase chain 4L (98 aa).

3 consecutive transmembrane segments (helical) span residues 1-21 (MSIVYMNVMLAFMIALIGTLL), 29-49 (SLMCLEGMMLAMYIFISLISL), and 59-79 (VPLIILVFAACEAALGLALLV).

Belongs to the complex I subunit 4L family. As to quaternary structure, core subunit of respiratory chain NADH dehydrogenase (Complex I) which is composed of 45 different subunits.

The protein resides in the mitochondrion inner membrane. It carries out the reaction a ubiquinone + NADH + 5 H(+)(in) = a ubiquinol + NAD(+) + 4 H(+)(out). Its function is as follows. Core subunit of the mitochondrial membrane respiratory chain NADH dehydrogenase (Complex I) which catalyzes electron transfer from NADH through the respiratory chain, using ubiquinone as an electron acceptor. Part of the enzyme membrane arm which is embedded in the lipid bilayer and involved in proton translocation. The protein is NADH-ubiquinone oxidoreductase chain 4L (MT-ND4L) of Hemiechinus auritus (Long-eared hedgehog).